Here is a 211-residue protein sequence, read N- to C-terminus: MDNDKYLKGTTTVGVVCTDGIVLASEQRATMGNFIASKTAKKVYQIDDLVAMTTAGSVGDAQQLVRLVNVESQLYKMRRNESMTIKGIATLMSNFLNSNRYYPMMVQLLIGGVDKNGPGIYSLDALGGSIEETRISATGSGSPMAYGVLEDQYREDMTVKEGLDLAIRAIHNATKRDSASGENIDVVVITKEAFRRLDPEEVKSIRASLPK.

The propeptide at methionine 1–glycine 9 is removed in mature form; by autocatalysis. The active-site Nucleophile is threonine 10.

This sequence belongs to the peptidase T1B family. In terms of assembly, the 20S proteasome core is composed of 14 alpha and 14 beta subunits that assemble into four stacked heptameric rings, resulting in a barrel-shaped structure. The two inner rings, each composed of seven catalytic beta subunits, are sandwiched by two outer rings, each composed of seven alpha subunits. The catalytic chamber with the active sites is on the inside of the barrel. Has a gated structure, the ends of the cylinder being occluded by the N-termini of the alpha-subunits. Is capped at one or both ends by the proteasome regulatory ATPase, PAN.

Its subcellular location is the cytoplasm. The catalysed reaction is Cleavage of peptide bonds with very broad specificity.. The formation of the proteasomal ATPase PAN-20S proteasome complex, via the docking of the C-termini of PAN into the intersubunit pockets in the alpha-rings, triggers opening of the gate for substrate entry. Interconversion between the open-gate and close-gate conformations leads to a dynamic regulation of the 20S proteasome proteolysis activity. Its function is as follows. Component of the proteasome core, a large protease complex with broad specificity involved in protein degradation. The sequence is that of Proteasome subunit beta from Methanosarcina barkeri (strain Fusaro / DSM 804).